An 813-amino-acid chain; its full sequence is Phenylalanine--tRNA ligase beta subunit (813 aa).

A tRNA-binding domain is found at 42–151; that stretch reads AKDFNHVVIG…ADAPVGKAYA (110 aa). The B5 domain occupies 405 to 480; it reads VKKAPVDITI…RLNGYEHIPE (76 aa). The Mg(2+) site is built by Asp458, Asp464, Glu467, and Glu468. The region spanning 720–813 is the FDX-ACB domain; it reads SKFPIVERDF…LKKNFDLSVR (94 aa).

It belongs to the phenylalanyl-tRNA synthetase beta subunit family. Type 1 subfamily. As to quaternary structure, tetramer of two alpha and two beta subunits. The cofactor is Mg(2+).

The protein resides in the cytoplasm. It catalyses the reaction tRNA(Phe) + L-phenylalanine + ATP = L-phenylalanyl-tRNA(Phe) + AMP + diphosphate + H(+). This chain is Phenylalanine--tRNA ligase beta subunit, found in Bdellovibrio bacteriovorus (strain ATCC 15356 / DSM 50701 / NCIMB 9529 / HD100).